The chain runs to 464 residues: tRNA(Ile)-lysidine synthase (464 aa).

26-31 (SGGPDS) contacts ATP.

It belongs to the tRNA(Ile)-lysidine synthase family.

Its subcellular location is the cytoplasm. The catalysed reaction is cytidine(34) in tRNA(Ile2) + L-lysine + ATP = lysidine(34) in tRNA(Ile2) + AMP + diphosphate + H(+). Its function is as follows. Ligates lysine onto the cytidine present at position 34 of the AUA codon-specific tRNA(Ile) that contains the anticodon CAU, in an ATP-dependent manner. Cytidine is converted to lysidine, thus changing the amino acid specificity of the tRNA from methionine to isoleucine. This chain is tRNA(Ile)-lysidine synthase, found in Geobacillus kaustophilus (strain HTA426).